Consider the following 100-residue polypeptide: MALDRGTLTRADLSEEVHREIGLSRADSAAVVEQVLEHMCLALARGENVKISGFGSFILREKGQRIGRNPKTGVEVPIAPRRVLTFRASQMLRDRIVSGN.

This sequence belongs to the bacterial histone-like protein family. In terms of assembly, heterodimer of an alpha and a beta chain.

Functionally, this protein is one of the two subunits of integration host factor, a specific DNA-binding protein that functions in genetic recombination as well as in transcriptional and translational control. This is Integration host factor subunit alpha from Rhizorhabdus wittichii (strain DSM 6014 / CCUG 31198 / JCM 15750 / NBRC 105917 / EY 4224 / RW1) (Sphingomonas wittichii).